Here is a 165-residue protein sequence, read N- to C-terminus: RxLR effector protein CRE12 (165 aa).

The signal sequence occupies residues 1 to 23; that stretch reads MRLAAFVLVAVAFAIIPDGRVSA. The short motif at 40–59 is the RxLR-dEER element; it reads RLLRLNAVPQPVETGNQEER.

The protein belongs to the RxLR effector family.

It is found in the secreted. Its subcellular location is the host cell. Its function is as follows. Effector that is involved in host plant infection. Contributes to virulence during the early infection stage, by inhibiting plant defense responses induced by both PAMP-triggered immunity (PTI) and effector-triggered immunity (ETI). The polypeptide is RxLR effector protein CRE12 (Phytophthora infestans (strain T30-4) (Potato late blight agent)).